The chain runs to 156 residues: ATP synthase subunit b (156 aa).

A helical membrane pass occupies residues Phe7–Pro27.

Belongs to the ATPase B chain family. F-type ATPases have 2 components, F(1) - the catalytic core - and F(0) - the membrane proton channel. F(1) has five subunits: alpha(3), beta(3), gamma(1), delta(1), epsilon(1). F(0) has three main subunits: a(1), b(2) and c(10-14). The alpha and beta chains form an alternating ring which encloses part of the gamma chain. F(1) is attached to F(0) by a central stalk formed by the gamma and epsilon chains, while a peripheral stalk is formed by the delta and b chains.

It is found in the cell inner membrane. In terms of biological role, f(1)F(0) ATP synthase produces ATP from ADP in the presence of a proton or sodium gradient. F-type ATPases consist of two structural domains, F(1) containing the extramembraneous catalytic core and F(0) containing the membrane proton channel, linked together by a central stalk and a peripheral stalk. During catalysis, ATP synthesis in the catalytic domain of F(1) is coupled via a rotary mechanism of the central stalk subunits to proton translocation. Its function is as follows. Component of the F(0) channel, it forms part of the peripheral stalk, linking F(1) to F(0). This is ATP synthase subunit b from Cupriavidus taiwanensis (strain DSM 17343 / BCRC 17206 / CCUG 44338 / CIP 107171 / LMG 19424 / R1) (Ralstonia taiwanensis (strain LMG 19424)).